The primary structure comprises 1824 residues: MDRYDMEDVVVAPPAECSSPLKEWRLKRQAGTLDRSDIIEFLKRESPKYFDYQTSATVKDTNVITLKCMFKESLAKEEIIDVVVEFMLGDNPSSALEKLRLEGNTATVCGKVFKNGEPTYSCRECGVDPTCVLCVNCFKRSAHRFHKYKMSTSGGGGCCDCGDDEAWKKDQYCELHLANRKNPLESKILTDAVLERVEICFGAILAFCVSYLEIEPNASLQCLDGNVEGGQVDGAQYCTVLYNDESHTFDQVIQTLTKIAKCRAKDAMEIVAAIDREGRAVVKCDTFEECNKLKVSIENQMILPTSLVSTARNNQSLRTSVLHIGAVACQQFALQLLGWFQEFLVRHYLFRKTFSELVQRKQETFCIRHILEYDVKLWKTARTCWHRLLISGMLMEYDNKMILAQEFSRRYATIVEDFISDDHDHAFSIVSLSVQLFTVPSIAHHLIAHEGIFDKLLHTFYHVAIEKFIRNKTLHFSKNIASLTFFKRANYILYDLRYLLSLKPDVLSNDLRNGFLEGCRALMRVLNVMQGMESMTRQTGQHMDYEPEWECAFNLHIKLATTISQVIDWASGDVKLLRKLYKMTMRALVSNSFIVGGEKVMQPKKVADHVANCLVYDISVQPVSIHLPLSRFFAGIYLHLGAHDLTYDGLQTETEALSIKLTPREIIEPVLCTQAMIAQVGAGLWRRNGYTLLHQLYFYRNVRCRVEMLDRDIACLQIGASLMESNEFLIHVLNRFNTIPWLQENYWSLLSGNEMNDDIIREASIFDEFLELLIVIIGERWMPGVSMVTEEDRLRKEIIQLLCIKPYSHSELSRALPDGNSGNSDNVFEEVINTVAVFKKPVGADSKGVYELKEHLLKEFNMYFYHYTKEDKSKAEELQRERRKAKKQLVCCPPPMLPKLTPAFTPMANILQCPVFLNICSLIMERALNAYSRSFTESHLQKVLHLLGYAIQEELSEHYPFLSFYERSQEYGILEKLEELARCPRLEAHYDFVLWTIERFKQLQAKQAPSDGRAGPSCSQQGTGGKLSLSAEEQAREERENRARLAAERRAHIMAQMQKAQKSFISSNAEMFADTENETRKESASTGPMDWEDIPPEEEQGAVALESKVACLGPDRKFYHGTDDTFKCILCFENCAISRGGRQLVSSAFVQTSRVIFTTPNLRNSQSALHISCCGHVMHYSCWLEYFTNEEFKELRRPHRNRAALAQAANVEFQCPYCRTLSNAIIPVTETLPAFSAPPSPNESYLPLDSFVEIMSTLAIELGNVKDHELTTLPSVSNILRLSGVVGGLAQFERSVQLIKNPPRLHADYIEGIEFLKKALLNTMKIQQSHLKDHPAIESIEMVPILWDSCSYTLQALEIYLYAVEKPLKAELSMRHQSCARNLVRACSRSSALEWETDLPLLPPMRSQAEFSSRLLDTIFNQNDTSVLEWDCFRVLVPFQFGVLNLMVPEKGYKTIIPSGSMFDFYIMQTMFLAQLTKAVLCFDVEKEKAKRAEKAPNSELTQLDYIEQLPSRIRDNMIDFYRRYNIPARVLQKTKQKQLVEEESEENQGHGQTVVIPCESHHLALLLEYVQRQMSSFLRCSCLFYRFLTDVDFPDTFPTDQPDRFDLMCQYLGLDPMLGVYFDMETVYATMMHSFASHPHIDREVEQRCQPDARRSLQVEPCLRPLPRLKVLCDDFSDLINSVSDIFCPNNEREEMKTPTMCLICGLILCGQSYCCQPELGKVSVGACTHHAHACGAEVGIFLRIRDCQVVYLGRGKGCFVPPPYLDEYGETDMGLRRGNPLRLSQAAYRKIYLQWLGHGLHGEIARLNDNANVAAAAQWHHM.

The segment at 107-178 (TVCGKVFKNG…KDQYCELHLA (72 aa)) adopts a UBR-type zinc-finger fold. Disordered stretches follow at residues 1006-1043 (KQAP…ENRA) and 1073-1093 (ADTE…DWED). Residues 1033–1043 (EQAREERENRA) are compositionally biased toward basic and acidic residues. The segment at 1126–1220 (FKCILCFENC…VEFQCPYCRT (95 aa)) adopts an RING-type; atypical zinc-finger fold.

The protein belongs to the E3 ubiquitin-protein ligase UBR1-like family.

The catalysed reaction is S-ubiquitinyl-[E2 ubiquitin-conjugating enzyme]-L-cysteine + [acceptor protein]-L-lysine = [E2 ubiquitin-conjugating enzyme]-L-cysteine + N(6)-ubiquitinyl-[acceptor protein]-L-lysine.. It functions in the pathway protein modification; protein ubiquitination. Its function is as follows. E3 ubiquitin-protein ligase which is a component of the N-end rule pathway. Recognizes and binds to proteins bearing specific N-terminal residues that are destabilizing according to the N-end rule, leading to their ubiquitination and subsequent degradation. In Drosophila melanogaster (Fruit fly), this protein is E3 ubiquitin-protein ligase UBR1.